We begin with the raw amino-acid sequence, 268 residues long: Undecaprenyl-diphosphatase (268 aa).

Helical transmembrane passes span Val8–Leu28, Ala41–Leu61, Phe83–Lys103, Val108–Trp128, Phe144–Val164, Ala184–Phe204, Ile218–Leu238, and Phe246–Leu266.

The protein belongs to the UppP family.

The protein resides in the cell inner membrane. The enzyme catalyses di-trans,octa-cis-undecaprenyl diphosphate + H2O = di-trans,octa-cis-undecaprenyl phosphate + phosphate + H(+). Its function is as follows. Catalyzes the dephosphorylation of undecaprenyl diphosphate (UPP). Confers resistance to bacitracin. This is Undecaprenyl-diphosphatase from Bradyrhizobium diazoefficiens (strain JCM 10833 / BCRC 13528 / IAM 13628 / NBRC 14792 / USDA 110).